Consider the following 1473-residue polypeptide: Sulfite reductase [NADPH] subunit beta (1473 aa).

In terms of domain architecture, Flavodoxin-like spans 728–876 (LTILFASDGG…AYNLWEPELW (149 aa)). [4Fe-4S] cluster-binding residues include C1328, C1334, C1373, and C1377. Position 1377 (C1377) interacts with siroheme.

This sequence belongs to the nitrite and sulfite reductase 4Fe-4S domain family. As to quaternary structure, alpha(2)-beta(2). The alpha component is a flavoprotein, the beta component is a hemoprotein. Siroheme is required as a cofactor. The cofactor is [4Fe-4S] cluster.

It localises to the cytoplasm. The enzyme catalyses hydrogen sulfide + 3 NADP(+) + 3 H2O = sulfite + 3 NADPH + 4 H(+). It participates in sulfur metabolism; hydrogen sulfide biosynthesis; hydrogen sulfide from sulfite (NADPH route): step 1/1. Functionally, catalyzes the reduction of sulfite to sulfide, one of several activities required for the biosynthesis of L-cysteine from sulfate. The sequence is that of Sulfite reductase [NADPH] subunit beta (sir1) from Schizosaccharomyces pombe (strain 972 / ATCC 24843) (Fission yeast).